The primary structure comprises 184 residues: Photosystem I assembly protein Ycf4 (184 aa).

Helical transmembrane passes span 22–42 (FCWA…GTSS) and 57–77 (IIFF…LFIS).

This sequence belongs to the Ycf4 family.

The protein resides in the plastid. Its subcellular location is the chloroplast thylakoid membrane. Its function is as follows. Seems to be required for the assembly of the photosystem I complex. The sequence is that of Photosystem I assembly protein Ycf4 from Crucihimalaya wallichii (Rock-cress).